Reading from the N-terminus, the 385-residue chain is Selenoprotein P (385 aa).

The N-terminal stretch at 1–19 (MWRSLGLALALCLLPYGGA) is a signal peptide. Sec59 is a non-standard amino acid (selenocysteine). Positions 59 to 62 (UYLC) form a cross-link, cysteinyl-selenocysteine (Sec-Cys); in isoform Se-P1. N-linked (GlcNAc...) asparagine glycans are attached at residues Asn83, Asn174, and Asn188. Cystine bridges form between Cys168-Cys186 and Cys172-Cys175. The disordered stretch occupies residues 196–262 (KTTEPSEEHN…KGQHRQGHLE (67 aa)). Residues 243–258 (LHHHHHHHKHKGQHRQ) are compositionally biased toward basic residues. A non-standard amino acid (selenocysteine) is located at residue Sec264. A Phosphoserine modification is found at Ser269. Non-standard amino acids (selenocysteine) are located at Sec282, Sec323, Sec335, and Sec357. Positions 357–385 (UHSQHVSPTEASPNUSUNNKTKKUKUNLN) are disordered. A compositionally biased stretch (polar residues) spans 360 to 369 (QHVSPTEASP). Thr365 carries an O-linked (Hex...) threonine; partial glycan. 4 non-standard amino acids (selenocysteine) are found at residues Sec371, Sec373, Sec380, and Sec382. The segment covering 376–385 (KTKKUKUNLN) has biased composition (basic residues).

The protein belongs to the selenoprotein P family. In terms of processing, isoform Se-P1 contains several disulfide bridges and a selenide-sulfide bond between Sec-59 and Cys-62. These bonds are speculated to serve as redox-active pairs. Post-translationally, phosphorylation sites are present in the extracellular medium. In terms of tissue distribution, widely expressed, mainly by the liver. Secreted in plasma.

It is found in the secreted. Functionally, might be responsible for some of the extracellular antioxidant defense properties of selenium or might be involved in the transport of selenium. May supply selenium to tissues such as brain and testis. This is Selenoprotein P from Rattus norvegicus (Rat).